Consider the following 520-residue polypeptide: Retinoic acid receptor RXR-beta (520 aa).

The disordered stretch occupies residues 1-167 (MSWATRPPFL…GGSGPPEDVK (167 aa)). Residues 1–191 (MSWATRPPFL…PGGPGAGKRL (191 aa)) are modulating. R25 is modified (omega-N-methylarginine). The segment covering 64–79 (EAGRDGMGDSGRDSRS) has biased composition (basic and acidic residues). A compositionally biased stretch (pro residues) spans 95-118 (SSPPGPPLTPSAPPPPMPPPPLGS). The span at 119–130 (PFPVISSSMGSP) shows a compositional bias: low complexity. Residues 131–140 (GLPPPAPPGF) are compositionally biased toward pro residues. 2 NR C4-type zinc fingers span residues 192-212 (CAICGDRSSGKHYGVYSCEGC) and 228-252 (CRDNKDCTVDKRQRNRCQYCRYQKC). The nuclear receptor DNA-binding region spans 192–257 (CAICGDRSSG…RYQKCLATGM (66 aa)). Positions 258–382 (KREAVQEERQ…HRSIDVRDGI (125 aa)) are hinge. The span at 263 to 275 (QEERQRGKDKDGD) shows a compositional bias: basic and acidic residues. 2 disordered regions span residues 263 to 285 (QEERQRGKDKDGDGDGAGGAPEE) and 300 to 323 (QKSDQGVEGPGATGGGGSSPNDPV). Positions 283 to 516 (PEEMPVDRIL…TFLMEMLEAP (234 aa)) constitute an NR LBD domain. Residues 307 to 317 (EGPGATGGGGS) are compositionally biased toward gly residues.

This sequence belongs to the nuclear hormone receptor family. NR2 subfamily. As to quaternary structure, homodimer (in vitro). Heterodimer with other retinoic acid receptor family members. Binds DNA preferentially as a RAR/RXR heterodimer. Interacts with NR1H3. Interacts with AKAP13. As to expression, in all tissues tested, including brain, thymus, spleen and liver.

It localises to the nucleus. The protein localises to the cytoplasm. In terms of biological role, receptor for retinoic acid. Retinoic acid receptors bind as heterodimers to their target response elements in response to their ligands, all-trans or 9-cis retinoic acid, and regulate gene expression in various biological processes. The RAR/RXR heterodimers bind to the retinoic acid response elements (RARE). This is Retinoic acid receptor RXR-beta (Rxrb) from Mus musculus (Mouse).